Reading from the N-terminus, the 312-residue chain is Ribosomal RNA small subunit methyltransferase H (312 aa).

Residues 35–37 (GGH), Asp54, Phe81, Asp100, and Gln107 contribute to the S-adenosyl-L-methionine site.

It belongs to the methyltransferase superfamily. RsmH family.

It localises to the cytoplasm. The enzyme catalyses cytidine(1402) in 16S rRNA + S-adenosyl-L-methionine = N(4)-methylcytidine(1402) in 16S rRNA + S-adenosyl-L-homocysteine + H(+). Its function is as follows. Specifically methylates the N4 position of cytidine in position 1402 (C1402) of 16S rRNA. In Campylobacter jejuni subsp. jejuni serotype O:2 (strain ATCC 700819 / NCTC 11168), this protein is Ribosomal RNA small subunit methyltransferase H.